The chain runs to 536 residues: MFS-type efflux pump MFS1 (536 aa).

3 consecutive transmembrane segments (helical) span residues 30-50, 80-100, and 102-122; these read VTGL…LLVA, YLLT…FFPV, and WVFL…GAAP. The N-linked (GlcNAc...) asparagine glycan is linked to N123. The next 3 membrane-spanning stretches (helical) occupy residues 133-153, 163-183, and 191-211; these read VAGI…AYSI, GAIG…GGAF, and WCFY…LIFL. N221 carries an N-linked (GlcNAc...) asparagine glycan. The next 8 membrane-spanning stretches (helical) occupy residues 234–254, 264–284, 306–326, 342–362, 366–386, 400–420, 426–446, and 503–523; these read IGTA…QWGG, IIAL…FQIR, FFLF…PIWF, IPMV…VTAI, APLY…LTTF, IIFG…AQAV, VAVG…LFVS, and TWYV…GMEW.

This sequence belongs to the major facilitator superfamily. TCR/Tet family.

It localises to the cell membrane. MFS-type efflux pump involved in the modulation susceptibility to azoles, including fluconazole, itraconazole, ketoconazole, miconazole and voriconazole. Confers also increased resistance chloramphenicol and thiamphenicol, suggesting that it acts as a pleiotropic drug transporter with a broad substrate spectrum. Finally, increases the tolerance to cycloheximide when expressed in S.cerevisiae, but not in dermatophyte species. The sequence is that of MFS-type efflux pump MFS1 from Trichophyton rubrum (strain ATCC MYA-4607 / CBS 118892) (Athlete's foot fungus).